A 456-amino-acid polypeptide reads, in one-letter code: Putative gluconeogenesis factor (456 aa).

It belongs to the gluconeogenesis factor family.

It localises to the cytoplasm. Functionally, required for morphogenesis under gluconeogenic growth conditions. The sequence is that of Putative gluconeogenesis factor from Nostoc sp. (strain PCC 7120 / SAG 25.82 / UTEX 2576).